The sequence spans 197 residues: Rac-like GTP-binding protein ARAC1 (197 aa).

13-20 (GDGAVGKT) is a GTP binding site. An Effector region motif is present at residues 35-43 (YVPTVFDNF). GTP-binding positions include 60–64 (DTAGQ) and 118–121 (TKLD). C194 carries the cysteine methyl ester modification. C194 carries the S-geranylgeranyl cysteine lipid modification. Positions 195 to 197 (SIL) are cleaved as a propeptide — removed in mature form.

The protein belongs to the small GTPase superfamily. Rho family. Interacts with SPK1. In terms of tissue distribution, ubiquitous.

Its subcellular location is the cytoplasm. The protein resides in the membrane. Its function is as follows. Inactive GDP-bound Rho GTPases reside in the cytosol, are found in a complex with Rho GDP-dissociation inhibitors (Rho GDIs), and are released from the GDI protein in order to translocate to membranes upon activation. The protein is Rac-like GTP-binding protein ARAC1 (ARAC1) of Arabidopsis thaliana (Mouse-ear cress).